We begin with the raw amino-acid sequence, 339 residues long: Malate/(S)-sulfolactate dehydrogenase (339 aa).

The protein belongs to the LDH2/MDH2 oxidoreductase family. As to quaternary structure, homodimer.

It localises to the cytoplasm. It carries out the reaction (S)-malate + NAD(+) = oxaloacetate + NADH + H(+). The catalysed reaction is (S)-malate + NADP(+) = oxaloacetate + NADPH + H(+). It catalyses the reaction (2S)-3-sulfolactate + NAD(+) = 3-sulfopyruvate + NADH + H(+). Its function is as follows. Acts on oxaloacetate, sulfopyruvate but not on pyruvate. Has a higher selectivity for the coenzyme NADH than for NADPH. This is Malate/(S)-sulfolactate dehydrogenase (mdh) from Methanothermus fervidus (strain ATCC 43054 / DSM 2088 / JCM 10308 / V24 S).